Consider the following 120-residue polypeptide: MARIAGVDLPKKKRVEYALTYIYGIGLKSSREILEAVGISFDKRVHELSEDEVSSIAKKIQQSYLVEGDLRKKVQMDIKSLMDLGNYRGIRHRKGLPVRGQTTKNNARTRKGKKKTVGSK.

The segment at 93–120 (RKGLPVRGQTTKNNARTRKGKKKTVGSK) is disordered. Residues 107 to 120 (ARTRKGKKKTVGSK) are compositionally biased toward basic residues.

Belongs to the universal ribosomal protein uS13 family. Part of the 30S ribosomal subunit. Forms a loose heterodimer with protein S19. Forms two bridges to the 50S subunit in the 70S ribosome.

In terms of biological role, located at the top of the head of the 30S subunit, it contacts several helices of the 16S rRNA. In the 70S ribosome it contacts the 23S rRNA (bridge B1a) and protein L5 of the 50S subunit (bridge B1b), connecting the 2 subunits; these bridges are implicated in subunit movement. Contacts the tRNAs in the A and P-sites. This Helicobacter pylori (strain P12) protein is Small ribosomal subunit protein uS13.